Here is a 115-residue protein sequence, read N- to C-terminus: UPF0738 protein SACOL1009 (115 aa).

This sequence belongs to the UPF0738 family.

The sequence is that of UPF0738 protein SACOL1009 from Staphylococcus aureus (strain COL).